A 301-amino-acid polypeptide reads, in one-letter code: tRNA dimethylallyltransferase 1 (301 aa).

Glycine 11 to threonine 18 serves as a coordination point for ATP. Threonine 13 to threonine 18 is a binding site for substrate. The segment at aspartate 36–glutamine 39 is interaction with substrate tRNA.

The protein belongs to the IPP transferase family. In terms of assembly, monomer. It depends on Mg(2+) as a cofactor.

The enzyme catalyses adenosine(37) in tRNA + dimethylallyl diphosphate = N(6)-dimethylallyladenosine(37) in tRNA + diphosphate. In terms of biological role, catalyzes the transfer of a dimethylallyl group onto the adenine at position 37 in tRNAs that read codons beginning with uridine, leading to the formation of N6-(dimethylallyl)adenosine (i(6)A). The polypeptide is tRNA dimethylallyltransferase 1 (Bacteroides fragilis (strain YCH46)).